We begin with the raw amino-acid sequence, 203 residues long: Small ribosomal subunit protein uS4 (203 aa).

Positions 93–156 (RRLDNVVYRL…MKVPAILEAV (64 aa)) constitute an S4 RNA-binding domain.

This sequence belongs to the universal ribosomal protein uS4 family. In terms of assembly, part of the 30S ribosomal subunit. Contacts protein S5. The interaction surface between S4 and S5 is involved in control of translational fidelity.

Its function is as follows. One of the primary rRNA binding proteins, it binds directly to 16S rRNA where it nucleates assembly of the body of the 30S subunit. In terms of biological role, with S5 and S12 plays an important role in translational accuracy. The chain is Small ribosomal subunit protein uS4 from Streptococcus pyogenes serotype M4 (strain MGAS10750).